A 100-amino-acid chain; its full sequence is Osteocalcin (100 aa).

A signal peptide spans 1–23 (MRALTLLALLALAALCIAGQAGA). Positions 24 to 51 (KPSGAESSKGAAFVSKQEGSEVVKRPRR) are excised as a propeptide. The Gla domain maps to 52-98 (YLYQWLGAPVPYPDPLEPRREVCELNPDCDELADHIGFQEAYRRFYG). Positions 68, 72, 75, and 81 each coordinate Ca(2+). Glu-68 is subject to 4-carboxyglutamate; partial. Residues Glu-72 and Glu-75 each carry the 4-carboxyglutamate modification. A disulfide bridge connects residues Cys-74 and Cys-80.

The protein belongs to the osteocalcin/matrix Gla protein family. Post-translationally, gamma-carboxyglutamate residues are formed by vitamin K dependent carboxylation by GGCX. These residues are essential for the binding of calcium. Decarboxylation promotes the hormone activity.

Its subcellular location is the secreted. In terms of biological role, bone protein that constitutes 1-2% of the total bone protein, and which acts as a negative regulator of bone formation. Functions to limit bone formation without impairing bone resorption or mineralization. It binds strongly to apatite and calcium. Its function is as follows. The uncarboxylated form acts as a hormone secreted by osteoblasts, which regulates different cellular processes, such as energy metabolism, male fertility and brain development. Regulates of energy metabolism by acting as a hormone favoring pancreatic beta-cell proliferation, insulin secretion and sensitivity and energy expenditure. Uncarboxylated osteocalcin hormone also promotes testosterone production in the testes: acts as a ligand for G protein-coupled receptor GPRC6A at the surface of Leydig cells, initiating a signaling response that promotes the expression of enzymes required for testosterone synthesis in a CREB-dependent manner. Also acts as a regulator of brain development: osteocalcin hormone crosses the blood-brain barrier and acts as a ligand for GPR158 on neurons, initiating a signaling response that prevents neuronal apoptosis in the hippocampus, favors the synthesis of all monoamine neurotransmitters and inhibits that of gamma-aminobutyric acid (GABA). Osteocalcin also crosses the placenta during pregnancy and maternal osteocalcin is required for fetal brain development. The sequence is that of Osteocalcin (BGLAP) from Homo sapiens (Human).